The primary structure comprises 340 residues: Probable cyclic nucleotide phosphodiesterase PsycPRwf_0181 (340 aa).

The tract at residues 1–36 (MAPLPHSVSPRHTQVADNGRLSEPTDYHPPTEISTD) is disordered. Fe cation is bound by residues Asp47, His49, Asp128, Asn158, His237, His276, and His278. Residues His49, Asp128, and 158–159 (NH) each bind AMP. AMP is bound at residue His278.

This sequence belongs to the cyclic nucleotide phosphodiesterase class-III family. The cofactor is Fe(2+).

The protein is Probable cyclic nucleotide phosphodiesterase PsycPRwf_0181 of Psychrobacter sp. (strain PRwf-1).